The sequence spans 394 residues: Elongation factor Tu 1 (394 aa).

The 195-residue stretch at lysine 10–glutamate 204 folds into the tr-type G domain. The segment at glycine 19–threonine 26 is G1. Glycine 19–threonine 26 contacts GTP. Threonine 26 contributes to the Mg(2+) binding site. Residues glycine 60–serine 64 are G2. A G3 region spans residues aspartate 81–glycine 84. Residues aspartate 81 to histidine 85 and asparagine 136 to aspartate 139 each bind GTP. The G4 stretch occupies residues asparagine 136–aspartate 139. The G5 stretch occupies residues serine 174–leucine 176.

This sequence belongs to the TRAFAC class translation factor GTPase superfamily. Classic translation factor GTPase family. EF-Tu/EF-1A subfamily. As to quaternary structure, monomer.

It localises to the cytoplasm. It carries out the reaction GTP + H2O = GDP + phosphate + H(+). In terms of biological role, GTP hydrolase that promotes the GTP-dependent binding of aminoacyl-tRNA to the A-site of ribosomes during protein biosynthesis. This Vibrio vulnificus (strain CMCP6) protein is Elongation factor Tu 1.